Consider the following 352-residue polypeptide: Plant intracellular Ras-group-related LRR protein 1 (352 aa).

Residues 1-25 are disordered; that stretch reads MREMGEKRRRGHLNPAGFAGGLHDH. LRR repeat units lie at residues 29–52, 53–75, 77–99, 100–122, 124–146, 147–169, 171–192, 195–217, 218–241, and 243–263; these read KNEEHKLDMSGMSMDALPHLTMSL, GQVTILDLSNNNLESIPESIIAR, LNVVVLDVRSNQLKSLPNSIGCL, SKLKVLNVSGNLLESLPNTIEEC, ALEELHANFNELTKLPDTLGFEL, HSLRKLSVNSNKLAQLPSSTSHM, ALRALDARLNCLRALPDGLENL, LEALNVSQNFQFLRELPYAVGLL, ASLRELDVSYNSIAALPDSMGCLT, and LARFSAVGNPLVSPPMDVVEQ. A GVYW; degenerate motif is present at residues 264–271; sequence GLDAMRAY.

It belongs to the SHOC2 family. Widely expressed but at a lower level in seedlings and stems.

In terms of biological role, leucine-rich repeat protein that likely mediates protein interactions, possibly in the context of signal transduction. This Oryza sativa subsp. japonica (Rice) protein is Plant intracellular Ras-group-related LRR protein 1 (IRL1).